The sequence spans 426 residues: D-tagatose-1,6-bisphosphate aldolase subunit KbaZ (426 aa).

The protein belongs to the GatZ/KbaZ family. KbaZ subfamily. Forms a complex with KbaY.

It participates in carbohydrate metabolism; D-tagatose 6-phosphate degradation; D-glyceraldehyde 3-phosphate and glycerone phosphate from D-tagatose 6-phosphate: step 2/2. Its function is as follows. Component of the tagatose-1,6-bisphosphate aldolase KbaYZ that is required for full activity and stability of the Y subunit. Could have a chaperone-like function for the proper and stable folding of KbaY. When expressed alone, KbaZ does not show any aldolase activity. In Escherichia coli O1:K1 / APEC, this protein is D-tagatose-1,6-bisphosphate aldolase subunit KbaZ.